Reading from the N-terminus, the 273-residue chain is 3-methyl-2-oxobutanoate hydroxymethyltransferase (273 aa).

2 residues coordinate Mg(2+): D53 and D92. Residues 53-54 (DS), D92, and K120 each bind 3-methyl-2-oxobutanoate. E122 contacts Mg(2+). E189 acts as the Proton acceptor in catalysis.

It belongs to the PanB family. As to quaternary structure, homodecamer; pentamer of dimers. It depends on Mg(2+) as a cofactor.

The protein localises to the cytoplasm. It carries out the reaction 3-methyl-2-oxobutanoate + (6R)-5,10-methylene-5,6,7,8-tetrahydrofolate + H2O = 2-dehydropantoate + (6S)-5,6,7,8-tetrahydrofolate. It participates in cofactor biosynthesis; (R)-pantothenate biosynthesis; (R)-pantoate from 3-methyl-2-oxobutanoate: step 1/2. Catalyzes the reversible reaction in which hydroxymethyl group from 5,10-methylenetetrahydrofolate is transferred onto alpha-ketoisovalerate to form ketopantoate. This is 3-methyl-2-oxobutanoate hydroxymethyltransferase from Cupriavidus taiwanensis (strain DSM 17343 / BCRC 17206 / CCUG 44338 / CIP 107171 / LMG 19424 / R1) (Ralstonia taiwanensis (strain LMG 19424)).